A 389-amino-acid chain; its full sequence is Phospho-N-acetylmuramoyl-pentapeptide-transferase (389 aa).

10 helical membrane passes run 25-45, 74-94, 97-117, 134-154, 190-210, 222-242, 259-279, 286-306, 311-331, and 366-386; these read RAVMANLTALLIGLAFGPWVI, MGGVLVLVSIAVSTLLWCDWG, FIWVVMLVTFGYGAIGWVDDY, FFWQTLIGLVAAVYLAFSVSE, ISYPLGVAGFIVLTYLVIVGS, GLVIMPVVLVGGGLGVFAYVM, AGELLIFCSALAGAGLAFLWF, VFMGDVGALALGGALGTVAVI, IVLFVMGGIFVVETLSVMAQV, and QVTVRFWIITMLLVLIGLSTL.

This sequence belongs to the glycosyltransferase 4 family. MraY subfamily. Mg(2+) is required as a cofactor.

It is found in the cell inner membrane. The catalysed reaction is UDP-N-acetyl-alpha-D-muramoyl-L-alanyl-gamma-D-glutamyl-meso-2,6-diaminopimeloyl-D-alanyl-D-alanine + di-trans,octa-cis-undecaprenyl phosphate = di-trans,octa-cis-undecaprenyl diphospho-N-acetyl-alpha-D-muramoyl-L-alanyl-D-glutamyl-meso-2,6-diaminopimeloyl-D-alanyl-D-alanine + UMP. Its pathway is cell wall biogenesis; peptidoglycan biosynthesis. Its function is as follows. Catalyzes the initial step of the lipid cycle reactions in the biosynthesis of the cell wall peptidoglycan: transfers peptidoglycan precursor phospho-MurNAc-pentapeptide from UDP-MurNAc-pentapeptide onto the lipid carrier undecaprenyl phosphate, yielding undecaprenyl-pyrophosphoryl-MurNAc-pentapeptide, known as lipid I. This chain is Phospho-N-acetylmuramoyl-pentapeptide-transferase, found in Cupriavidus necator (strain ATCC 17699 / DSM 428 / KCTC 22496 / NCIMB 10442 / H16 / Stanier 337) (Ralstonia eutropha).